Consider the following 389-residue polypeptide: Succinate--CoA ligase [ADP-forming] subunit beta (389 aa).

The ATP-grasp domain occupies 9-244 (KQLLAEYGIP…KTQEDPTEVI (236 aa)). Residues Lys-46, 53-55 (GRG), Gly-102, and Glu-107 contribute to the ATP site. The Mg(2+) site is built by Asn-199 and Asp-213. Residues Asn-264 and 321–323 (GIV) each bind substrate.

Belongs to the succinate/malate CoA ligase beta subunit family. Heterotetramer of two alpha and two beta subunits. It depends on Mg(2+) as a cofactor.

The enzyme catalyses succinate + ATP + CoA = succinyl-CoA + ADP + phosphate. It carries out the reaction GTP + succinate + CoA = succinyl-CoA + GDP + phosphate. It participates in carbohydrate metabolism; tricarboxylic acid cycle; succinate from succinyl-CoA (ligase route): step 1/1. Succinyl-CoA synthetase functions in the citric acid cycle (TCA), coupling the hydrolysis of succinyl-CoA to the synthesis of either ATP or GTP and thus represents the only step of substrate-level phosphorylation in the TCA. The beta subunit provides nucleotide specificity of the enzyme and binds the substrate succinate, while the binding sites for coenzyme A and phosphate are found in the alpha subunit. The chain is Succinate--CoA ligase [ADP-forming] subunit beta from Stenotrophomonas maltophilia (strain R551-3).